Reading from the N-terminus, the 105-residue chain is Nucleoid-associated protein Lm4b_02677 (105 aa).

The span at 1-16 shows a compositional bias: low complexity; sequence MRGMGNMQGMMKQMQK. The interval 1–23 is disordered; it reads MRGMGNMQGMMKQMQKMQKEMAK.

Belongs to the YbaB/EbfC family. Homodimer.

The protein localises to the cytoplasm. It localises to the nucleoid. Functionally, binds to DNA and alters its conformation. May be involved in regulation of gene expression, nucleoid organization and DNA protection. The chain is Nucleoid-associated protein Lm4b_02677 from Listeria monocytogenes serotype 4b (strain CLIP80459).